Consider the following 340-residue polypeptide: 4-dimethylallyltryptophan N-methyltransferase ifgB (340 aa).

This sequence belongs to the methyltransferase superfamily. As to quaternary structure, homodimer.

It catalyses the reaction 4-(3-methylbut-2-enyl)-L-tryptophan + S-adenosyl-L-methionine = 4-(3-methylbut-2-enyl)-L-abrine + S-adenosyl-L-homocysteine + H(+). It participates in alkaloid biosynthesis; ergot alkaloid biosynthesis. In terms of biological role, 4-dimethylallyltryptophan N-methyltransferase; part of the gene cluster that mediates the biosynthesis of isofumigaclavines, fungal ergot alkaloids. The tryptophan dimethylallyltransferase ifgA catalyzes the first step of ergot alkaloid biosynthesis by condensing dimethylallyl diphosphate (DMAP) and tryptophan to form 4-dimethylallyl-L-tryptophan. The second step is catalyzed by the methyltransferase ifgB that methylates 4-dimethylallyl-L-tryptophan in the presence of S-adenosyl-L-methionine, resulting in the formation of N-methyl-dimethylallyl-L-tryptophan. The catalase ifgD and the FAD-dependent oxidoreductase ifgC then transform N-methyl-dimethylallyl-L-tryptophan to chanoclavine-I which is further oxidized by ifgE in the presence of NAD(+), resulting in the formation of chanoclavine-I aldehyde. The chanoclavine-I aldehyde reductases ifgG and/or fgaOx3 reduce chanoclavine-I aldehyde to dihydrochanoclavine-I aldehyde that spontaneously dehydrates to form 6,8-dimethyl-6,7-didehydroergoline. The festuclavine dehydrogenases ifgF1 and/or ifgF2 then catalyze the reduction of 6,8-dimethyl-6,7-didehydroergoline to form festuclavine. Hydrolysis of festuclavine by a yet undetermined cytochrome P450 monooxygenase (called ifgH) then leads to the formation of isofumigaclavine B which is in turn acetylated by ifgI to isofumigaclavine A. Penicillium roqueforti has interestingly at least two sets of genes for the consumption of chanoclavine-I aldehyde on three different loci, the OYEs ifgG/fgaOx3 and the festuclavine synthase homologs ifgF1/ifgF2. The reason for the duplication of these genes is unclear, probably to ensure the conversion of chanoclavine-I aldehyde by differential gene expression under various environmental conditions. This chain is 4-dimethylallyltryptophan N-methyltransferase ifgB, found in Penicillium roqueforti (strain FM164).